We begin with the raw amino-acid sequence, 435 residues long: Trigger factor (435 aa).

The 86-residue stretch at 163 to 248 (DDITLIDFTG…INEIKRKELA (86 aa)) folds into the PPIase FKBP-type domain.

Belongs to the FKBP-type PPIase family. Tig subfamily.

It localises to the cytoplasm. The catalysed reaction is [protein]-peptidylproline (omega=180) = [protein]-peptidylproline (omega=0). In terms of biological role, involved in protein export. Acts as a chaperone by maintaining the newly synthesized protein in an open conformation. Functions as a peptidyl-prolyl cis-trans isomerase. The chain is Trigger factor from Desulforamulus reducens (strain ATCC BAA-1160 / DSM 100696 / MI-1) (Desulfotomaculum reducens).